The sequence spans 101 residues: Urinary protein 2 (101 aa).

Positions 1-21 (MGKHILLLPLGLSLLMSSLLA) are cleaved as a signal peptide. The 78-residue stretch at 22–99 (LQCFRCTSFD…CSATPFCNMV (78 aa)) folds into the UPAR/Ly6 domain. 5 cysteine pairs are disulfide-bonded: Cys24–Cys51, Cys27–Cys36, Cys43–Cys70, Cys73–Cys89, and Cys90–Cys96. N-linked (GlcNAc...) asparagine glycosylation is found at Asn67 and Asn74.

Post-translationally, N-glycosylated.

The protein localises to the secreted. The protein is Urinary protein 2 of Rattus norvegicus (Rat).